A 360-amino-acid chain; its full sequence is DNA replication and repair protein RecF (360 aa).

Residue 30 to 37 coordinates ATP; the sequence is GQNGSGKT.

This sequence belongs to the RecF family.

It localises to the cytoplasm. Functionally, the RecF protein is involved in DNA metabolism; it is required for DNA replication and normal SOS inducibility. RecF binds preferentially to single-stranded, linear DNA. It also seems to bind ATP. This Shewanella sp. (strain MR-4) protein is DNA replication and repair protein RecF.